The following is a 661-amino-acid chain: MSNFSIISDYKPAGDQPKAIDEIIKGLNNKKRSQMLLGITGSGKTFTMANIIERTNRPTLIMAHNKTLAAQIYSEMKSIFPKNAVEYFVSYYDYYQPEAYIPKTDVFIEKDSSINEQIDLMRHSATRSLLERRDVIVVSSVSCIYGLGSPDLYYQMTVNLEPGKSYPRDKLLNDLVNLQYERNDIGFERGCFRVKGDNVDVFPSHYSDKAWRLSFFGNELEYIHEFDPLTGEKLVKLDKAIIYGNSHFVMPKETVNKAISEIEEELQKRIAFLKSQDKLLETQRINQRTQYDLEMLTETGSCKGVENYSRFFTGRKAGEPPPTLFEYLPKDALLFVDESHVSVPQIRAMYNGDRARKEVLVEHGFRLPSALDNRPLKFEEWDNFRPQTVFVSATPSLFELNETGGEVVELIIRPTGLLDPECIIKPATNQVEDLVGEIQSTIAKGFCVLVTTLTKKMAEDLTNYLQELKYKTSYLHSNVHTLERIEILRDLRQGTIDILVGINLLREGLDIPECGLVAILDADKEGFLRSEVSLIQTIGRAARNSEGRVILYADKMTKSIDKAISETMRRRTIQQEHNEKYGIIPKTINRTIHALAELEKVDSKLDKKQTHNLFENPAKLKAHIDKLRKEMLKAASNLEFEQAAKLRDQLKTLEEAALELS.

The region spanning 25-182 (KGLNNKKRSQ…NDLVNLQYER (158 aa)) is the Helicase ATP-binding domain. 38-45 (GITGSGKT) contacts ATP. Positions 91-114 (YYDYYQPEAYIPKTDVFIEKDSSI) match the Beta-hairpin motif. The Helicase C-terminal domain occupies 430-592 (QVEDLVGEIQ…IIPKTINRTI (163 aa)). A UVR domain is found at 621–656 (KAHIDKLRKEMLKAASNLEFEQAAKLRDQLKTLEEA).

This sequence belongs to the UvrB family. As to quaternary structure, forms a heterotetramer with UvrA during the search for lesions. Interacts with UvrC in an incision complex.

Its subcellular location is the cytoplasm. The UvrABC repair system catalyzes the recognition and processing of DNA lesions. A damage recognition complex composed of 2 UvrA and 2 UvrB subunits scans DNA for abnormalities. Upon binding of the UvrA(2)B(2) complex to a putative damaged site, the DNA wraps around one UvrB monomer. DNA wrap is dependent on ATP binding by UvrB and probably causes local melting of the DNA helix, facilitating insertion of UvrB beta-hairpin between the DNA strands. Then UvrB probes one DNA strand for the presence of a lesion. If a lesion is found the UvrA subunits dissociate and the UvrB-DNA preincision complex is formed. This complex is subsequently bound by UvrC and the second UvrB is released. If no lesion is found, the DNA wraps around the other UvrB subunit that will check the other stand for damage. This chain is UvrABC system protein B, found in Rickettsia bellii (strain OSU 85-389).